The chain runs to 156 residues: Regulatory protein RecX (156 aa).

Belongs to the RecX family.

The protein localises to the cytoplasm. In terms of biological role, modulates RecA activity. The polypeptide is Regulatory protein RecX (Pseudomonas putida (strain W619)).